A 116-amino-acid polypeptide reads, in one-letter code: Large ribosomal subunit protein bL19 (116 aa).

This sequence belongs to the bacterial ribosomal protein bL19 family.

This protein is located at the 30S-50S ribosomal subunit interface and may play a role in the structure and function of the aminoacyl-tRNA binding site. This Haemophilus influenzae (strain 86-028NP) protein is Large ribosomal subunit protein bL19.